We begin with the raw amino-acid sequence, 431 residues long: Chorismate synthase 2, chloroplastic (431 aa).

A chloroplast-targeting transit peptide spans 1–48; that stretch reads MASSMLTKQFLGAPFSSFGSGQQPSKLCSSNLRFPTHRSQPKRLEIQA. The tract at residues 93–141 is disordered; the sequence is DRRRPGQSRITTPRKETDTCKISSGTADGLTTGSPIKVEVPNTDQRGND. The span at 112 to 126 shows a compositional bias: polar residues; the sequence is CKISSGTADGLTTGS.

The protein belongs to the chorismate synthase family. As to quaternary structure, homotetramer. FMNH2 serves as cofactor. As to expression, predominantly expressed in flowers and roots and, to a lesser extent, in stems, leaves, and cotyledons.

It is found in the plastid. The protein resides in the chloroplast. The catalysed reaction is 5-O-(1-carboxyvinyl)-3-phosphoshikimate = chorismate + phosphate. It functions in the pathway metabolic intermediate biosynthesis; chorismate biosynthesis; chorismate from D-erythrose 4-phosphate and phosphoenolpyruvate: step 7/7. Its function is as follows. Catalyzes the last common step of the biosynthesis of aromatic amino acids, produced via the shikimic acid pathway. This is Chorismate synthase 2, chloroplastic (CS2) from Solanum lycopersicum (Tomato).